Consider the following 432-residue polypeptide: MNFTKSEALHKEALEHIVGGVNSPSRSFKAVGGGAPVAMERGKGAYFWDVDGNKYIDYLAAYGPIITGHAHPHITKAITTAAENGVLYGTPTALEVKFAKMLKEAMPALDKVRFVNSGTEAVMTTIRVARAYTGRTKIMKFAGCYHGHSDLVLVAAGSGPSTLGTPDSAGVPQSIAQEVITVPFNNVETLKEALDKWGHEVAAILVEPIVGNFGIVEPKPGFLEKVNELVHEAGALVIYDEVITAFRFMYGGAQDLLGVTPDLTALGKVIGGGLPIGAYGGKKEIMEQVAPLGPAYQAGTMAGNPASMASGIACLEVLQQEGLYEKLDELGAMLEKGILEQAAKHNIDITLNRLKGALTVYFTTNTIEDYDAAQDTDGEMFGKFFKLMLQEGVNLAPSKYEAWFLTTEHTKEDIEYTIEAVGRAFAALADNK.

Lys268 bears the N6-(pyridoxal phosphate)lysine mark.

The protein belongs to the class-III pyridoxal-phosphate-dependent aminotransferase family. HemL subfamily. Homodimer. The cofactor is pyridoxal 5'-phosphate.

It localises to the cytoplasm. It carries out the reaction (S)-4-amino-5-oxopentanoate = 5-aminolevulinate. It participates in porphyrin-containing compound metabolism; protoporphyrin-IX biosynthesis; 5-aminolevulinate from L-glutamyl-tRNA(Glu): step 2/2. This chain is Glutamate-1-semialdehyde 2,1-aminomutase 1, found in Bacillus cereus (strain B4264).